A 313-amino-acid polypeptide reads, in one-letter code: Porphobilinogen deaminase (313 aa).

An S-(dipyrrolylmethanemethyl)cysteine modification is found at cysteine 242.

Belongs to the HMBS family. Monomer. It depends on dipyrromethane as a cofactor.

The enzyme catalyses 4 porphobilinogen + H2O = hydroxymethylbilane + 4 NH4(+). Its pathway is porphyrin-containing compound metabolism; protoporphyrin-IX biosynthesis; coproporphyrinogen-III from 5-aminolevulinate: step 2/4. In terms of biological role, tetrapolymerization of the monopyrrole PBG into the hydroxymethylbilane pre-uroporphyrinogen in several discrete steps. This is Porphobilinogen deaminase from Escherichia coli (strain K12 / MC4100 / BW2952).